We begin with the raw amino-acid sequence, 282 residues long: Pantothenate synthetase (282 aa).

Residue 30–37 (MGNLHDGH) participates in ATP binding. The active-site Proton donor is the His-37. Gln-61 contributes to the (R)-pantoate binding site. Position 61 (Gln-61) interacts with beta-alanine. 149 to 152 (GEKD) lines the ATP pocket. Gln-155 provides a ligand contact to (R)-pantoate. 186 to 189 (MSSR) is a binding site for ATP.

This sequence belongs to the pantothenate synthetase family. Homodimer.

The protein localises to the cytoplasm. The enzyme catalyses (R)-pantoate + beta-alanine + ATP = (R)-pantothenate + AMP + diphosphate + H(+). The protein operates within cofactor biosynthesis; (R)-pantothenate biosynthesis; (R)-pantothenate from (R)-pantoate and beta-alanine: step 1/1. Catalyzes the condensation of pantoate with beta-alanine in an ATP-dependent reaction via a pantoyl-adenylate intermediate. This Alteromonas mediterranea (strain DSM 17117 / CIP 110805 / LMG 28347 / Deep ecotype) protein is Pantothenate synthetase.